The primary structure comprises 346 residues: Phenylalanine--tRNA ligase alpha subunit (346 aa).

Mg(2+) is bound at residue Glu-261.

Belongs to the class-II aminoacyl-tRNA synthetase family. Phe-tRNA synthetase alpha subunit type 1 subfamily. Tetramer of two alpha and two beta subunits. Requires Mg(2+) as cofactor.

It localises to the cytoplasm. It carries out the reaction tRNA(Phe) + L-phenylalanine + ATP = L-phenylalanyl-tRNA(Phe) + AMP + diphosphate + H(+). This is Phenylalanine--tRNA ligase alpha subunit from Dehalococcoides mccartyi (strain ATCC BAA-2100 / JCM 16839 / KCTC 5957 / BAV1).